The primary structure comprises 177 residues: Calcineurin subunit B (177 aa).

EF-hand domains lie at 25–60, 62–92, 94–129, and 135–170; these read KEIKKLYKRFKKLDKDGNGTISKDEFLMIPELAVNP, VKRVISIFDENGDGSVNFKEFIAALSVFNAQ, DKQRKLEFAFKVYDIDGDGYISNGELFTVLKMMVGN, and QLQQIVDKTILEADEDGDGKISFEEFAKTLSHQDLE. Residues aspartate 38, aspartate 40, asparagine 42, threonine 44, glutamate 49, aspartate 70, asparagine 72, aspartate 74, serine 76, glutamate 81, aspartate 107, aspartate 109, aspartate 111, tyrosine 113, glutamate 118, aspartate 148, aspartate 150, aspartate 152, lysine 154, and glutamate 159 each coordinate Ca(2+).

This sequence belongs to the calcineurin regulatory subunit family. Composed of a catalytic subunit (A) and a regulatory subunit (B).

Functionally, regulatory subunit of calcineurin, a calcium-dependent, calmodulin stimulated protein phosphatase. Confers calcium sensitivity. The sequence is that of Calcineurin subunit B (CNB1) from Naegleria gruberi (Amoeba).